A 1112-amino-acid chain; its full sequence is Patronin (microtubule-binding protein) homolog (1112 aa).

The 122-residue stretch at 165–286 (IDSVDALLFW…VNAFLADLFV (122 aa)) folds into the Calponin-homology (CH) domain. Disordered regions lie at residues 324-358 (AARSSMHNRNRPRMYNPPPAVSHSQGPSRSVSRMS), 485-504 (EGEDGTQSARLNRASSQPSV), 542-566 (MQQQMQQQQQQQAQAQSNYASPSQL), and 788-834 (NHSE…GSGE). 2 stretches are compositionally biased toward polar residues: residues 345 to 358 (SHSQGPSRSVSRMS) and 489 to 504 (GTQSARLNRASSQPSV). A compositionally biased stretch (low complexity) spans 542–557 (MQQQMQQQQQQQAQAQ). Residues 802 to 816 (QNDRDDLSTGRKSDD) are compositionally biased toward basic and acidic residues. The stretch at 850–914 (ALIAKTMKRK…YKRKKLEKEL (65 aa)) forms a coiled coil. Positions 916-965 (AELSARSTGRGHSQPPFIRTKSQMSEVTESSRQNTPRMRGQSSVEQRVSV) are disordered. Residues 935–951 (TKSQMSEVTESSRQNTP) show a composition bias toward polar residues. Positions 956 to 965 (QSSVEQRVSV) are enriched in low complexity. One can recognise a CKK domain in the interval 972–1109 (THKLYAKTVT…RIPHSGTPAH (138 aa)).

Belongs to the CAMSAP1 family. As to quaternary structure, interacts with dapk-1. Expressed in larval and adult epidermis, intestine and pharynx. Broadly expressed in the nervous system. Expressed in body wall muscle cells.

It is found in the cell projection. The protein localises to the axon. The protein resides in the dendrite. Its subcellular location is the cell membrane. It localises to the sarcolemma. It is found in the cytoplasm. The protein localises to the cytosol. The protein resides in the cytoskeleton. Its subcellular location is the perikaryon. Required for microtubule stability and anchorage by binding to the minus ends of microtubules. Acts redundantly with noca-1 to control circumferential microtubule assembly along the body which is necessary for larval development, viability, morphology and integrity of the epidermis. Promotes microtubule stability and polymerization in neurons. Involved in the maintenance of neurite morphology in ALM and PLM neurons. May play a role in synaptic protein localization in the PLM neuron. May act upstream of dlk-1 in neuronal regeneration. Plays a role in postembryonic epidermal tissue integrity and wound healing. This chain is Patronin (microtubule-binding protein) homolog, found in Caenorhabditis elegans.